The primary structure comprises 526 residues: Tyrosine-protein kinase transforming protein Src (526 aa).

Positions 1 to 57 (MGSSKSKPKDPSQRRCSLEPPDSTHHGGFPASQTPNKTAAPDTHRTPSRSFGTVATE) are disordered. Gly2 carries the N-myristoyl glycine; by host lipid modification. Residues 7-25 (KPKDPSQRRCSLEPPDSTH) show a composition bias toward basic and acidic residues. The SH3 domain maps to 81–142 (GGVTTFVALY…PSNYVAPSDS (62 aa)). Positions 148-245 (WYFGKITRRE…GLCHRLTNVC (98 aa)) constitute an SH2 domain. Residues 267–517 (LRLEVKLGQG…TFEYLQAQLL (251 aa)) enclose the Protein kinase domain. ATP is bound by residues 273–281 (LGQGCFGEV) and Lys295. Asp386 functions as the Proton acceptor in the catalytic mechanism. Residue Tyr416 is modified to Phosphotyrosine; by autocatalysis.

This sequence belongs to the protein kinase superfamily. Tyr protein kinase family. SRC subfamily. Post-translationally, the phosphorylated form is termed pp60v-src.

The enzyme catalyses L-tyrosyl-[protein] + ATP = O-phospho-L-tyrosyl-[protein] + ADP + H(+). This phosphoprotein, required for both the initiation and the maintenance of neoplastic transformation, is a protein kinase that catalyzes the phosphorylation of tyrosine residues in vitro. In Galliformes, this protein is Tyrosine-protein kinase transforming protein Src (V-SRC).